A 380-amino-acid polypeptide reads, in one-letter code: Putative heat stress transcription factor B-4a (380 aa).

The segment at L216–V245 is hydrophobic repeat HR-A/B. 2 disordered regions span residues P268–E296 and I314–P380. Positions V278–E296 are enriched in low complexity. A Nuclear localization signal motif is present at residues R346 to R348.

It belongs to the HSF family. Class B subfamily. Homotrimer. Exhibits temperature-dependent phosphorylation.

Its subcellular location is the nucleus. In terms of biological role, transcriptional regulator that specifically binds DNA of heat shock promoter elements (HSE). In Oryza sativa subsp. japonica (Rice), this protein is Putative heat stress transcription factor B-4a (HSFB4A).